A 401-amino-acid polypeptide reads, in one-letter code: Probable tRNA sulfurtransferase (401 aa).

A THUMP domain is found at 60–165 (EAVMARLKHV…EDATYLTFRD (106 aa)). Residues 183–184 (MI), 208–209 (HF), arginine 265, glycine 287, and glutamine 296 each bind ATP.

The protein belongs to the ThiI family.

Its subcellular location is the cytoplasm. It carries out the reaction [ThiI sulfur-carrier protein]-S-sulfanyl-L-cysteine + a uridine in tRNA + 2 reduced [2Fe-2S]-[ferredoxin] + ATP + H(+) = [ThiI sulfur-carrier protein]-L-cysteine + a 4-thiouridine in tRNA + 2 oxidized [2Fe-2S]-[ferredoxin] + AMP + diphosphate. It catalyses the reaction [ThiS sulfur-carrier protein]-C-terminal Gly-Gly-AMP + S-sulfanyl-L-cysteinyl-[cysteine desulfurase] + AH2 = [ThiS sulfur-carrier protein]-C-terminal-Gly-aminoethanethioate + L-cysteinyl-[cysteine desulfurase] + A + AMP + 2 H(+). It participates in cofactor biosynthesis; thiamine diphosphate biosynthesis. Its function is as follows. Catalyzes the ATP-dependent transfer of a sulfur to tRNA to produce 4-thiouridine in position 8 of tRNAs, which functions as a near-UV photosensor. Also catalyzes the transfer of sulfur to the sulfur carrier protein ThiS, forming ThiS-thiocarboxylate. This is a step in the synthesis of thiazole, in the thiamine biosynthesis pathway. The sulfur is donated as persulfide by IscS. This is Probable tRNA sulfurtransferase from Bacillus licheniformis (strain ATCC 14580 / DSM 13 / JCM 2505 / CCUG 7422 / NBRC 12200 / NCIMB 9375 / NCTC 10341 / NRRL NRS-1264 / Gibson 46).